A 346-amino-acid polypeptide reads, in one-letter code: Methylthioribose-1-phosphate isomerase (346 aa).

Substrate-binding positions include 46–48, arginine 89, and glutamine 196; that span reads RGA. Aspartate 237 (proton donor) is an active-site residue. Residue 247–248 coordinates substrate; it reads NK.

It belongs to the eIF-2B alpha/beta/delta subunits family. MtnA subfamily.

It carries out the reaction 5-(methylsulfanyl)-alpha-D-ribose 1-phosphate = 5-(methylsulfanyl)-D-ribulose 1-phosphate. It functions in the pathway amino-acid biosynthesis; L-methionine biosynthesis via salvage pathway; L-methionine from S-methyl-5-thio-alpha-D-ribose 1-phosphate: step 1/6. Catalyzes the interconversion of methylthioribose-1-phosphate (MTR-1-P) into methylthioribulose-1-phosphate (MTRu-1-P). This chain is Methylthioribose-1-phosphate isomerase, found in Geobacter metallireducens (strain ATCC 53774 / DSM 7210 / GS-15).